Reading from the N-terminus, the 585-residue chain is Probable ubiquitin carboxyl-terminal hydrolase 9 (585 aa).

A disordered region spans residues 1-23 (MSLLRWMGMNSPGSTDRRKSTWE). The 384-residue stretch at 41–424 (YGLTNYGNTC…TAYVLFYTAA (384 aa)) folds into the USP domain. C50 (nucleophile) is an active-site residue. Residues 85–110 (CTKTNHPESSSSRHSKKKSMENRKSS) are disordered. Residue H375 is the Proton acceptor of the active site. The span at 447–470 (SQLKQESVEVSNLSSTPRSNSTIT) shows a compositional bias: polar residues. The interval 447-473 (SQLKQESVEVSNLSSTPRSNSTITYPD) is disordered. At S505 the chain carries Phosphoserine. 2 disordered regions span residues 511 to 530 (FHSR…SRSF) and 540 to 585 (KFFG…RSKR). Positions 542 to 551 (FGSSQSNSPK) are enriched in polar residues. S549 carries the phosphoserine modification. Positions 553–570 (SPLRDTHKSSDEHSESKH) are enriched in basic and acidic residues. Residues 574 to 585 (LPWQFSRSRSKR) show a composition bias toward polar residues.

It belongs to the peptidase C19 family. In terms of assembly, interacts with bun107 and bun62.

It localises to the nucleus. Its subcellular location is the cytoplasm. The protein localises to the cell tip. It catalyses the reaction Thiol-dependent hydrolysis of ester, thioester, amide, peptide and isopeptide bonds formed by the C-terminal Gly of ubiquitin (a 76-residue protein attached to proteins as an intracellular targeting signal).. Functionally, ubiquitin C-terminal hydrolase involved in regulating actin dynamics and/or endocytosis at cell tips and septa. The protein is Probable ubiquitin carboxyl-terminal hydrolase 9 (ubp9) of Schizosaccharomyces pombe (strain 972 / ATCC 24843) (Fission yeast).